The primary structure comprises 771 residues: ATP-dependent DNA helicase UvrD1 (771 aa).

The tract at residues 1 to 21 (MSVHATDAKPPGPSPADQLLD) is disordered. The 291-residue stretch at 21–311 (DGLNPQQRQA…ILLEQNYRST (291 aa)) folds into the UvrD-like helicase ATP-binding domain. ATP contacts are provided by residues 45–50 (GSGKTA) and Arg-309. The region spanning 312–603 (QNILSAANSV…TLMTLHTAKG (292 aa)) is the UvrD-like helicase C-terminal domain. The tract at residues 691–716 (FSAPVSGAGRFGSARPSPTRSGASRR) is disordered.

This sequence belongs to the helicase family. UvrD subfamily. As to quaternary structure, monomer. The cofactor is Mg(2+).

The enzyme catalyses Couples ATP hydrolysis with the unwinding of duplex DNA by translocating in the 3'-5' direction.. The catalysed reaction is ATP + H2O = ADP + phosphate + H(+). Its function is as follows. DNA-dependent ATPase, acting on dsDNA with a 3'-ssDNA tail, unwinding with 3'-to 5'-polarity. Also highly efficient on nicked DNA. Involved in the post-incision events of nucleotide excision repair. The sequence is that of ATP-dependent DNA helicase UvrD1 (uvrD1) from Mycobacterium bovis (strain ATCC BAA-935 / AF2122/97).